The chain runs to 112 residues: Large ribosomal subunit protein uL22 (112 aa).

Belongs to the universal ribosomal protein uL22 family. Part of the 50S ribosomal subunit.

Its function is as follows. This protein binds specifically to 23S rRNA; its binding is stimulated by other ribosomal proteins, e.g. L4, L17, and L20. It is important during the early stages of 50S assembly. It makes multiple contacts with different domains of the 23S rRNA in the assembled 50S subunit and ribosome. The globular domain of the protein is located near the polypeptide exit tunnel on the outside of the subunit, while an extended beta-hairpin is found that lines the wall of the exit tunnel in the center of the 70S ribosome. The sequence is that of Large ribosomal subunit protein uL22 from Legionella pneumophila subsp. pneumophila (strain Philadelphia 1 / ATCC 33152 / DSM 7513).